Here is a 630-residue protein sequence, read N- to C-terminus: Telomere repeat-binding protein 5 (630 aa).

3 disordered regions span residues methionine 1–histidine 38, glutamate 56–lysine 78, and tyrosine 308–arginine 327. Positions glycine 57–asparagine 71 are enriched in low complexity. Residues threonine 309–serine 325 show a composition bias toward polar residues. A Ubiquitin-like domain is found at valine 354–proline 433. The tract at residues leucine 463–arginine 489 is disordered. The HTH myb-type domain maps to alanine 523–arginine 582. Positions tryptophan 551–valine 578 form a DNA-binding region, H-T-H motif.

In terms of assembly, homodimer. As to expression, expressed ubiquitously.

The protein localises to the nucleus. In terms of biological role, binds specifically to the plant telomeric double-stranded DNA sequences. At least 6 repeats of telomeric sequences are required for binding. The polypeptide is Telomere repeat-binding protein 5 (TRP5) (Arabidopsis thaliana (Mouse-ear cress)).